Here is a 482-residue protein sequence, read N- to C-terminus: Glutamate--tRNA ligase 1 (482 aa).

A 'HIGH' region motif is present at residues Pro18 to Gly28. Positions Lys252–Arg256 match the 'KMSKS' region motif. Lys255 lines the ATP pocket.

The protein belongs to the class-I aminoacyl-tRNA synthetase family. Glutamate--tRNA ligase type 1 subfamily. Monomer.

The protein resides in the cytoplasm. It catalyses the reaction tRNA(Glu) + L-glutamate + ATP = L-glutamyl-tRNA(Glu) + AMP + diphosphate. Catalyzes the attachment of glutamate to tRNA(Glu) in a two-step reaction: glutamate is first activated by ATP to form Glu-AMP and then transferred to the acceptor end of tRNA(Glu). The chain is Glutamate--tRNA ligase 1 from Erythrobacter litoralis (strain HTCC2594).